Consider the following 363-residue polypeptide: Palmitoyltransferase ZDHHC9 (363 aa).

Topologically, residues 1-35 (MSVMVVRKKVTRKWEKLPGRNTFCCDGRVMMARQK) are cytoplasmic. The chain crosses the membrane as a helical span at residues 36–56 (GIFYLTLFLILGTCTLFFAFE). Residues 57 to 63 (CRYLAVQ) lie on the Lumenal side of the membrane. A helical transmembrane segment spans residues 64–84 (LSPAIPVFAAMLFLFSMATLL). Residues 85–183 (RTSFSDPGVI…NCVGKRNYRY (99 aa)) are Cytoplasmic-facing. The DHHC domain maps to 139 to 189 (KYCYTCKIFRPPRASHCSICDNCVERFDHHCPWVGNCVGKRNYRYFYLFIL). The active-site S-palmitoyl cysteine intermediate is Cys169. Residues 184–204 (FYLFILSLSLLTIYVFAFNIV) traverse the membrane as a helical segment. The Lumenal portion of the chain corresponds to 205 to 228 (YVALKSLKIGFLETLKETPGTVLE). Residues 229–249 (VLICFFTLWSVVGLTGFHTFL) form a helical membrane-spanning segment. Over 250–363 (VALNQTTNED…PPQEVTEAEK (114 aa)) the chain is Cytoplasmic. Residues 303-363 (PLEESGSRPP…PPQEVTEAEK (61 aa)) are disordered. The segment covering 310-322 (RPPSTQEASTSLL) has biased composition (polar residues). The span at 345 to 355 (EMPPPEPPEPP) shows a compositional bias: pro residues.

It belongs to the DHHC palmitoyltransferase family. ERF2/ZDHHC9 subfamily. In terms of assembly, interacts with GOLGA7.

It localises to the endoplasmic reticulum membrane. The protein localises to the golgi apparatus membrane. It catalyses the reaction L-cysteinyl-[protein] + hexadecanoyl-CoA = S-hexadecanoyl-L-cysteinyl-[protein] + CoA. In terms of biological role, palmitoyltransferase that catalyzes the addition of palmitate onto various protein substrates, such as ADRB2, GSDMD, HRAS, NRAS and CGAS. The ZDHHC9-GOLGA7 complex is a palmitoyltransferase specific for HRAS and NRAS. May have a palmitoyltransferase activity toward the beta-2 adrenergic receptor/ADRB2 and therefore regulate G protein-coupled receptor signaling. Acts as a regulator of innate immunity by catalyzing palmitoylation of CGAS, thereby promoting CGAS homodimerization and cyclic GMP-AMP synthase activity. Activates pyroptosis by catalyzing palmitoylation of gasdermin-D (GSDMD), thereby promoting membrane translocation and pore formation of GSDMD. The chain is Palmitoyltransferase ZDHHC9 (ZDHHC9) from Bos taurus (Bovine).